The following is a 349-amino-acid chain: Dihydroorotase (349 aa).

Zn(2+)-binding residues include His17 and His19. Residues 19 to 21 and Asn45 each bind substrate; that span reads HLR. Positions 103, 140, and 178 each coordinate Zn(2+). Lys103 is subject to N6-carboxylysine. His140 lines the substrate pocket. Residue Leu224 participates in substrate binding. Asp252 serves as a coordination point for Zn(2+). Residue Asp252 is part of the active site. 2 residues coordinate substrate: His256 and Ala268.

It belongs to the metallo-dependent hydrolases superfamily. DHOase family. Class II DHOase subfamily. As to quaternary structure, homodimer. It depends on Zn(2+) as a cofactor.

It catalyses the reaction (S)-dihydroorotate + H2O = N-carbamoyl-L-aspartate + H(+). It functions in the pathway pyrimidine metabolism; UMP biosynthesis via de novo pathway; (S)-dihydroorotate from bicarbonate: step 3/3. In terms of biological role, catalyzes the reversible cyclization of carbamoyl aspartate to dihydroorotate. This is Dihydroorotase from Buchnera aphidicola subsp. Schizaphis graminum (strain Sg).